A 102-amino-acid polypeptide reads, in one-letter code: Large ribosomal subunit protein bL21 (102 aa).

This sequence belongs to the bacterial ribosomal protein bL21 family. Part of the 50S ribosomal subunit. Contacts protein L20.

Its function is as follows. This protein binds to 23S rRNA in the presence of protein L20. This is Large ribosomal subunit protein bL21 from Bacillus licheniformis (strain ATCC 14580 / DSM 13 / JCM 2505 / CCUG 7422 / NBRC 12200 / NCIMB 9375 / NCTC 10341 / NRRL NRS-1264 / Gibson 46).